The following is a 240-amino-acid chain: Uridylate kinase (240 aa).

13–16 (KASG) is an ATP binding site. The involved in allosteric activation by GTP stretch occupies residues 21–26 (GGQGFG). Residue Gly-55 coordinates UMP. Residues Gly-56 and Arg-60 each contribute to the ATP site. UMP-binding positions include Asp-75 and 136 to 143 (TGNPFFTT). ATP-binding residues include Thr-163, Gln-164, Tyr-169, and Asp-172.

This sequence belongs to the UMP kinase family. In terms of assembly, homohexamer.

It is found in the cytoplasm. It carries out the reaction UMP + ATP = UDP + ADP. It participates in pyrimidine metabolism; CTP biosynthesis via de novo pathway; UDP from UMP (UMPK route): step 1/1. With respect to regulation, allosterically activated by GTP. Inhibited by UTP. Functionally, catalyzes the reversible phosphorylation of UMP to UDP. This Rhizobium johnstonii (strain DSM 114642 / LMG 32736 / 3841) (Rhizobium leguminosarum bv. viciae) protein is Uridylate kinase.